The primary structure comprises 234 residues: Segregation and condensation protein A (234 aa).

Belongs to the ScpA family. As to quaternary structure, component of a cohesin-like complex composed of ScpA, ScpB and the Smc homodimer, in which ScpA and ScpB bind to the head domain of Smc. The presence of the three proteins is required for the association of the complex with DNA.

The protein localises to the cytoplasm. Participates in chromosomal partition during cell division. May act via the formation of a condensin-like complex containing Smc and ScpB that pull DNA away from mid-cell into both cell halves. The chain is Segregation and condensation protein A from Streptococcus pyogenes serotype M6 (strain ATCC BAA-946 / MGAS10394).